A 416-amino-acid chain; its full sequence is Serine hydroxymethyltransferase (416 aa).

(6S)-5,6,7,8-tetrahydrofolate is bound by residues Leu-121 and 125–127; that span reads GHL. Lys-229 is subject to N6-(pyridoxal phosphate)lysine.

It belongs to the SHMT family. As to quaternary structure, homodimer. Requires pyridoxal 5'-phosphate as cofactor.

The protein localises to the cytoplasm. It carries out the reaction (6R)-5,10-methylene-5,6,7,8-tetrahydrofolate + glycine + H2O = (6S)-5,6,7,8-tetrahydrofolate + L-serine. The protein operates within one-carbon metabolism; tetrahydrofolate interconversion. It functions in the pathway amino-acid biosynthesis; glycine biosynthesis; glycine from L-serine: step 1/1. Its function is as follows. Catalyzes the reversible interconversion of serine and glycine with tetrahydrofolate (THF) serving as the one-carbon carrier. This reaction serves as the major source of one-carbon groups required for the biosynthesis of purines, thymidylate, methionine, and other important biomolecules. Also exhibits THF-independent aldolase activity toward beta-hydroxyamino acids, producing glycine and aldehydes, via a retro-aldol mechanism. The polypeptide is Serine hydroxymethyltransferase (Aromatoleum aromaticum (strain DSM 19018 / LMG 30748 / EbN1) (Azoarcus sp. (strain EbN1))).